We begin with the raw amino-acid sequence, 353 residues long: N6-methyladenosine RNA demethylase ALKB1 (353 aa).

The region spanning 223 to 352 (IAQAAIVNFY…RINLNVRQMR (130 aa)) is the Fe2OG dioxygenase domain. Fe cation contacts are provided by H241, D243, and H308. R343 serves as a coordination point for 2-oxoglutarate.

This sequence belongs to the alkB family. Requires Fe(2+) as cofactor.

It is found in the cytoplasm. The protein resides in the P-body. It catalyses the reaction an N(6)-methyladenosine in mRNA + 2-oxoglutarate + O2 = an adenosine in mRNA + formaldehyde + succinate + CO2. Its function is as follows. RNA demethylase that regulates the stability of mRNAs through an m(6)A-dependent manner. M6A is a modification present at internal sites of mRNAs and some non-coding RNAs and plays a role in mRNA stability and processing. Plays a role in pathogenicity towards plant host. This is N6-methyladenosine RNA demethylase ALKB1 from Pyricularia oryzae (strain 70-15 / ATCC MYA-4617 / FGSC 8958) (Rice blast fungus).